The sequence spans 280 residues: H-2 class II histocompatibility antigen gamma chain (280 aa).

Residues 1 to 30 (MDDQRDLISNHEQLPILGQRARAPESNCNR) lie on the Cytoplasmic side of the membrane. Position 9 is a phosphoserine (serine 9). A helical; Signal-anchor for type II membrane protein transmembrane segment spans residues 31 to 56 (GVLYTSVSVLVALLLAGQATTAYFLY). The Extracellular segment spans residues 57–280 (QQQGRLDKLT…TKQDMGQMFL (224 aa)). 2 N-linked (GlcNAc...) asparagine glycosylation sites follow: asparagine 114 and asparagine 120. Residues 194–255 (LTKCQEEVSH…HTKSRGRHNC (62 aa)) enclose the Thyroglobulin type-1 domain. 3 cysteine pairs are disulfide-bonded: cysteine 197–cysteine 216, cysteine 227–cysteine 234, and cysteine 236–cysteine 255. The tract at residues 246-268 (HTKSRGRHNCSEPLDMEDPSSGL) is disordered. Serine 266 carries an O-linked (Xyl...) (chondroitin sulfate) serine glycan.

As to quaternary structure, nonamer composed of three alpha/beta/gamma heterotrimers. Interacts with CD44; this complex is essential for the MIF-induced signaling cascade that results in B cell survival. In terms of assembly, interacts with the mature form of CTSL; the complex survive in neutral pH environment.

It is found in the late endosome. The protein localises to the lysosome. It localises to the cell membrane. The protein resides in the endoplasmic reticulum membrane. Its subcellular location is the golgi apparatus. It is found in the trans-Golgi network. The protein localises to the endosome. It localises to the secreted. Its function is as follows. Plays a critical role in MHC class II antigen processing by stabilizing peptide-free class II alpha/beta heterodimers in a complex soon after their synthesis and directing transport of the complex from the endoplasmic reticulum to compartments where peptide loading of class II takes place. Enhance also the stimulation of T-cell responses through interaction with CD44. In terms of biological role, binds to the peptide-binding site of MHC class II alpha/beta heterodimers forming an alpha-beta-CLIP complex, thereby preventing the loading of antigenic peptides to the MHC class II complex until its release by HLA-DM in the endosome. Stabilizes the conformation of mature CTSL by binding to its active site and serving as a chaperone to help maintain a pool of mature enzyme in endocytic compartments and extracellular space of antigen-presenting cells (APCs). This is H-2 class II histocompatibility antigen gamma chain from Rattus norvegicus (Rat).